The sequence spans 145 residues: 3-dehydroquinate dehydratase (145 aa).

Tyrosine 24 serves as the catalytic Proton acceptor. Residues asparagine 76, histidine 82, and aspartate 89 each coordinate substrate. Histidine 102 acts as the Proton donor in catalysis. Substrate contacts are provided by residues 103–104 (VS) and arginine 113.

The protein belongs to the type-II 3-dehydroquinase family. In terms of assembly, homododecamer.

The enzyme catalyses 3-dehydroquinate = 3-dehydroshikimate + H2O. The protein operates within metabolic intermediate biosynthesis; chorismate biosynthesis; chorismate from D-erythrose 4-phosphate and phosphoenolpyruvate: step 3/7. In terms of biological role, catalyzes a trans-dehydration via an enolate intermediate. This chain is 3-dehydroquinate dehydratase, found in Janthinobacterium sp. (strain Marseille) (Minibacterium massiliensis).